Reading from the N-terminus, the 22-residue chain is thr operon leader peptide (22 aa).

Belongs to the thr operon leader peptide family.

This protein is involved in control of the biosynthesis of threonine. This chain is thr operon leader peptide, found in Yersinia pestis bv. Antiqua (strain Antiqua).